A 327-amino-acid polypeptide reads, in one-letter code: Mycothiol acetyltransferase (327 aa).

2 N-acetyltransferase domains span residues 11 to 159 (EPHG…VTLP) and 162 to 327 (VQIR…EGTS). A 1D-myo-inositol 2-(L-cysteinylamino)-2-deoxy-alpha-D-glucopyranoside-binding site is contributed by glutamate 42. 89–91 (LVI) is a binding site for acetyl-CoA. Residues glutamate 189, lysine 228, and glutamate 251 each coordinate 1D-myo-inositol 2-(L-cysteinylamino)-2-deoxy-alpha-D-glucopyranoside. Acetyl-CoA contacts are provided by residues 255–257 (LGV) and 262–268 (QGLGLGR). Tyrosine 289 contacts 1D-myo-inositol 2-(L-cysteinylamino)-2-deoxy-alpha-D-glucopyranoside. An acetyl-CoA-binding site is contributed by 294-299 (NAPAIR).

Belongs to the acetyltransferase family. MshD subfamily. Monomer.

It catalyses the reaction 1D-myo-inositol 2-(L-cysteinylamino)-2-deoxy-alpha-D-glucopyranoside + acetyl-CoA = mycothiol + CoA + H(+). In terms of biological role, catalyzes the transfer of acetyl from acetyl-CoA to desacetylmycothiol (Cys-GlcN-Ins) to form mycothiol. The protein is Mycothiol acetyltransferase of Acidothermus cellulolyticus (strain ATCC 43068 / DSM 8971 / 11B).